The sequence spans 429 residues: 3-phosphoshikimate 1-carboxyvinyltransferase (429 aa).

3-phosphoshikimate is bound by residues Lys-22, Ser-23, and Arg-27. Lys-22 contributes to the phosphoenolpyruvate binding site. Positions 93 and 122 each coordinate phosphoenolpyruvate. The 3-phosphoshikimate site is built by Ser-168, Ser-169, Gln-170, Ser-196, Asp-311, and Lys-338. Gln-170 contacts phosphoenolpyruvate. Residue Asp-311 is the Proton acceptor of the active site. Residues Arg-342 and Arg-384 each contribute to the phosphoenolpyruvate site.

Belongs to the EPSP synthase family. In terms of assembly, monomer.

It is found in the cytoplasm. It carries out the reaction 3-phosphoshikimate + phosphoenolpyruvate = 5-O-(1-carboxyvinyl)-3-phosphoshikimate + phosphate. It functions in the pathway metabolic intermediate biosynthesis; chorismate biosynthesis. In terms of biological role, catalyzes the transfer of the enolpyruvyl moiety of phosphoenolpyruvate (PEP) to the 5-hydroxyl of shikimate-3-phosphate (S3P) to produce enolpyruvyl shikimate-3-phosphate and inorganic phosphate. The chain is 3-phosphoshikimate 1-carboxyvinyltransferase from Methanocaldococcus jannaschii (strain ATCC 43067 / DSM 2661 / JAL-1 / JCM 10045 / NBRC 100440) (Methanococcus jannaschii).